Here is a 249-residue protein sequence, read N- to C-terminus: 2,3-bisphosphoglycerate-dependent phosphoglycerate mutase (249 aa).

Substrate-binding positions include 8–15 (RHGESVWN), 21–22 (TG), R60, 87–90 (ERHY), K98, 114–115 (RR), and 183–184 (GN). Catalysis depends on H9, which acts as the Tele-phosphohistidine intermediate. E87 acts as the Proton donor/acceptor in catalysis.

It belongs to the phosphoglycerate mutase family. BPG-dependent PGAM subfamily.

It carries out the reaction (2R)-2-phosphoglycerate = (2R)-3-phosphoglycerate. It participates in carbohydrate degradation; glycolysis; pyruvate from D-glyceraldehyde 3-phosphate: step 3/5. Functionally, catalyzes the interconversion of 2-phosphoglycerate and 3-phosphoglycerate. The sequence is that of 2,3-bisphosphoglycerate-dependent phosphoglycerate mutase from Endomicrobium trichonymphae.